We begin with the raw amino-acid sequence, 242 residues long: uncharacterized protein (242 aa).

Residues 1 to 12 (MKLRRERFERRN) show a composition bias toward basic and acidic residues. A disordered region spans residues 1–21 (MKLRRERFERRNGSGKNSQSS). Over 1-23 (MKLRRERFERRNGSGKNSQSSSS) the chain is Cytoplasmic. The chain crosses the membrane as a helical span at residues 24–44 (WMVTFTDLITLILVFFILLFS). The Extracellular portion of the chain corresponds to 45 to 242 (MSQIDLQKFK…VIKKSKTTSS (198 aa)). Residues 64–91 (GNGLQPDQTSIEKKNTSPSDTKKQEDQQ) are disordered. Residues 73–89 (SIEKKNTSPSDTKKQED) show a composition bias toward basic and acidic residues. One can recognise an OmpA-like domain in the interval 117-238 (ERGVVLVLQE…RVEIVIKKSK (122 aa)).

Belongs to the MotB family.

The protein localises to the cell membrane. Functionally, may be involved in some transport function. This is an uncharacterized protein from Bacillus subtilis (strain 168).